Reading from the N-terminus, the 351-residue chain is Geranylgeranyl pyrophosphate synthase (351 aa).

Isopentenyl diphosphate is bound by residues Lys-55, Arg-58, and Gln-93. Asp-100 and Asp-104 together coordinate Mg(2+). Arg-109 is a dimethylallyl diphosphate binding site. Isopentenyl diphosphate is bound at residue Arg-110. 5 residues coordinate dimethylallyl diphosphate: Lys-196, Thr-197, Gln-236, Lys-253, and Lys-262.

This sequence belongs to the FPP/GGPP synthase family. As to quaternary structure, interacts with fps1. It depends on Mg(2+) as a cofactor.

It is found in the cytoplasm. The protein resides in the nucleus. It carries out the reaction isopentenyl diphosphate + dimethylallyl diphosphate = (2E)-geranyl diphosphate + diphosphate. It catalyses the reaction isopentenyl diphosphate + (2E)-geranyl diphosphate = (2E,6E)-farnesyl diphosphate + diphosphate. The enzyme catalyses isopentenyl diphosphate + (2E,6E)-farnesyl diphosphate = (2E,6E,10E)-geranylgeranyl diphosphate + diphosphate. The protein operates within isoprenoid biosynthesis; farnesyl diphosphate biosynthesis; farnesyl diphosphate from geranyl diphosphate and isopentenyl diphosphate: step 1/1. Its pathway is isoprenoid biosynthesis; geranyl diphosphate biosynthesis; geranyl diphosphate from dimethylallyl diphosphate and isopentenyl diphosphate: step 1/1. It functions in the pathway isoprenoid biosynthesis; geranylgeranyl diphosphate biosynthesis; geranylgeranyl diphosphate from farnesyl diphosphate and isopentenyl diphosphate: step 1/1. Functionally, catalyzes the trans-addition of the 3 molecules of IPP onto DMAPP to form geranylgeranyl pyrophosphate. Required for the membrane attachment of ypt7 and rhb1. May be involved in vesicle trafficking and protein sorting. Required for forespore membrane formation. This chain is Geranylgeranyl pyrophosphate synthase (spo9), found in Schizosaccharomyces pombe (strain 972 / ATCC 24843) (Fission yeast).